A 436-amino-acid polypeptide reads, in one-letter code: Nicotinate phosphoribosyltransferase (436 aa).

Histidine 231 is modified (phosphohistidine; by autocatalysis).

It belongs to the NAPRTase family. Transiently phosphorylated on a His residue during the reaction cycle. Phosphorylation strongly increases the affinity for substrates and increases the rate of nicotinate D-ribonucleotide production. Dephosphorylation regenerates the low-affinity form of the enzyme, leading to product release.

The enzyme catalyses nicotinate + 5-phospho-alpha-D-ribose 1-diphosphate + ATP + H2O = nicotinate beta-D-ribonucleotide + ADP + phosphate + diphosphate. It participates in cofactor biosynthesis; NAD(+) biosynthesis; nicotinate D-ribonucleotide from nicotinate: step 1/1. Its function is as follows. Catalyzes the synthesis of beta-nicotinate D-ribonucleotide from nicotinate and 5-phospho-D-ribose 1-phosphate at the expense of ATP. In Vibrio campbellii (strain ATCC BAA-1116), this protein is Nicotinate phosphoribosyltransferase.